Here is a 123-residue protein sequence, read N- to C-terminus: UPF0102 protein MCA0184 (123 aa).

The protein belongs to the UPF0102 family.

This Methylococcus capsulatus (strain ATCC 33009 / NCIMB 11132 / Bath) protein is UPF0102 protein MCA0184.